The chain runs to 288 residues: 4-hydroxybenzoate octaprenyltransferase (288 aa).

6 helical membrane passes run 33–53, 99–119, 163–183, 213–233, 234–254, and 268–288; these read LWAL…AVFV, LFIV…TMTI, ESLP…AVAY, LIIG…GWLN, GLGW…GWQQ, and AFMN…MSYL.

This sequence belongs to the UbiA prenyltransferase family. The cofactor is Mg(2+).

It localises to the cell inner membrane. It catalyses the reaction all-trans-octaprenyl diphosphate + 4-hydroxybenzoate = 4-hydroxy-3-(all-trans-octaprenyl)benzoate + diphosphate. The protein operates within cofactor biosynthesis; ubiquinone biosynthesis. In terms of biological role, catalyzes the prenylation of para-hydroxybenzoate (PHB) with an all-trans polyprenyl group. Mediates the second step in the final reaction sequence of ubiquinone-8 (UQ-8) biosynthesis, which is the condensation of the polyisoprenoid side chain with PHB, generating the first membrane-bound Q intermediate 3-octaprenyl-4-hydroxybenzoate. The chain is 4-hydroxybenzoate octaprenyltransferase from Klebsiella pneumoniae subsp. pneumoniae (strain ATCC 700721 / MGH 78578).